The following is a 356-amino-acid chain: Ubiquitin-conjugating enzyme E2 variant 3 (356 aa).

Residues 1 to 83 (MSDQPGTSRP…LEDLHNYHRE (83 aa)) form a disordered region. Residues 18 to 32 (PTKTATRRRARPIAI) show a composition bias toward polar residues. Positions 63–76 (QPRKTVPKNVPLED) are enriched in basic and acidic residues. Residues 169-324 (DIITEFMNRS…AREFVMKMAG (156 aa)) form the UBC core domain.

This sequence belongs to the ubiquitin-conjugating enzyme family. In terms of assembly, may interact with pmk-3. Expressed ubiquitously.

It is found in the nucleus. Its subcellular location is the cytoplasm. The protein resides in the cell projection. It localises to the dendrite. The protein localises to the axon. It is found in the cilium. In terms of biological role, possible negative regulator of polyubiquitination. May modulate the activity of the p38 MAP kinase pnk-3. May have a role in axon termination and synaptic transmission at motor and mechanosensory neurons. Plays a role in intraflagellar transport in cilia and cilium length regulation. In Caenorhabditis elegans, this protein is Ubiquitin-conjugating enzyme E2 variant 3.